A 117-amino-acid polypeptide reads, in one-letter code: uncharacterized protein (117 aa).

Polar residues predominate over residues 1-19 (MTSNPSSSADQPLSGTTVP). The segment at 1–28 (MTSNPSSSADQPLSGTTVPGSVPGKAPE) is disordered. The next 2 membrane-spanning stretches (helical) occupy residues 38-58 (AAVW…LIFI) and 76-96 (LPLG…TVFA).

It is found in the cell membrane. This is an uncharacterized protein from Mycobacterium tuberculosis (strain ATCC 25618 / H37Rv).